A 973-amino-acid chain; its full sequence is MESIADHFFLAGLSNGFVSVSNSQFRADRLDEDAISVSSSIIQNNTRKSPLKRVSITSESSFYKENTFAHHNTTGSNSVGPKKPFLDYHHSTSNTPTKKKKDSFDHASVTSLHRRSLSSNTSTPRKYHSRKPYSEPSVIDKEHLQNRVSIGTTHTQNDLYQSYVAYPDALPLFAATHPFERRYPPSLLHQFPSSKDIKNETPTIDRCDFPNYVPMFAFPNDITIKESDVRPVSTYHSFALTSDNNSHLYGICVVVWVAMPQSMQNDLEKECEVWRANNTTVEDREVAEKLLSSLETERSKLSSLLLKMQEKELEGSDSIDPILLEKIDVCEENIILYTELLRPMRYKLPRFVHGLTNNRTLWIPNAYGLLSKHSHLQSFCRDWLRIVCSSIQAEDLDFIPSSDLNSLKSLNLQSFVKNICCDVPLPPKGLLQLQVNVGPLNLYAFRSPVNEIPGWNDVDLYPLFRALSIPNILVLFEAALMEAKVIFLSENLGMLGYASQALLHLLYPLTWQGLYIPVLPRRLISCFEAPCSYIIGTLSYFFHMDDVPLDNIPLVVCDLDKNSVSTFGKIVRLSRSLRSKLQAHLKLAAPLHDKFYVPHSPPKYTMETYPNNVLSLSTVTCFPLREKFSIPALLSFRSSNFSKRPYVLSPILNGFLKLQDNPSSIYFAKQTDSRQSSASKLLYARLQAPEHARNFSSPPFTRPASPSSSKFRFSSSSFQSTIRRNSLTSPYSVPELRSSESNQNKAGSINTGSAVNLVSSKPGEQKVHIMYKEGHKLRRIYKMFPADSAGSICAVSGYALGDVHVQCDNCGLRVNLDFIKHISMPCVPACFNSQQILVTFLKFFIKILGSYRNYLRKPHMSRENFGISKGSGGLIGSFDFNKFTRQASKVHGSWISSLCSSQAFAEFIGDRCELDLNDPRVALFDQLLLCERNHGKPRLFGKATPFLRDKSLEIQRIEVAPIPASLKNDNALH.

Positions 69–79 (AHHNTTGSNSV) are enriched in polar residues. The interval 69–136 (AHHNTTGSNS…YHSRKPYSEP (68 aa)) is disordered. A phosphoserine mark is found at Ser134 and Ser318. In terms of domain architecture, uDENN spans 169–427 (ALPLFAATHP…NICCDVPLPP (259 aa)). The cDENN domain maps to 449-586 (VNEIPGWNDV…LRSKLQAHLK (138 aa)). The dDENN domain occupies 588-919 (AAPLHDKFYV…DRCELDLNDP (332 aa)). The segment at 693-713 (RNFSSPPFTRPASPSSSKFRF) is disordered. Phosphoserine is present on Ser726. Positions 729-750 (SPYSVPELRSSESNQNKAGSIN) are disordered. A compositionally biased stretch (polar residues) spans 739–750 (SESNQNKAGSIN).

Its subcellular location is the cytoplasm. It localises to the nucleus. This is DENN domain-containing protein C297.05 from Schizosaccharomyces pombe (strain 972 / ATCC 24843) (Fission yeast).